We begin with the raw amino-acid sequence, 337 residues long: L-Ala-D/L-amino acid epimerase (337 aa).

Substrate contacts are provided by residues threonine 129 and lysine 151–lysine 153. Mg(2+) contacts are provided by aspartate 177, glutamate 203, and aspartate 228. Substrate is bound by residues lysine 250 and aspartate 300 to aspartate 302.

This sequence belongs to the mandelate racemase/muconate lactonizing enzyme family. Mg(2+) serves as cofactor.

In terms of biological role, broad specificity dipeptide epimerase. Catalyzes the epimerization of L-Ala-L-Ala, L-Ala-L-Glu, L-Ala-L-Ser, L-Ala-L-Thr and L-Ala-L-Met (in vitro). This Maribacter sp. (strain HTCC2170 / KCCM 42371) protein is L-Ala-D/L-amino acid epimerase.